The following is a 604-amino-acid chain: MDFDEVLREVGSFGLYQKVIICSVLLPAALPCAFHAYSQLFIAATPQHFCRVPELEPWTQDYVQLVKNLSIPRNRNGAYAECSMYSRNYTDIVRYLEYRPPPDLLRQQAEDLLKLQPDTTQVVPCQHGWHYDKSIYSSTVVQEWNLVCDRSFLVTLALVVFGVGGLLGNYVFGYLVDLWGRRPSFYAYLLLEIIACAASAFAWNYYTWLGLRFVVGLTVPAILASPYVLAIELVGPERRVFCTIVSNIAYSLGLVVLAGVIYIVRDWRELSLAVSMPLLMLFSCFFVLPESPRWLMAVGKTRRAIKILKVMARVNGVRVNRDFVERLQRKLVITRAAETKSSMTTHYGILDLFRGPNMRRKTLIITLIWFANTSVYVGLSYYAPALGGDEIWNFFLAGAVELPTYLLLWPGLSYFGRRWILFISMLVGGVACVATFLYPDITLLLYCVGKMGISSSFVVLPLMASELYPTVVRGLGMSFSSVISMVGPIVIPMINHMGQQMLVLPLIVMGALLILGGFASLLLPETRNRNLPQTLEEGEAVPLSFLLCCCVESERKPNNIRASPKKRILPEAGTPVFHRVDTPVSDRVPCKIVCSICKNEMRTL.

The Cytoplasmic segment spans residues methionine 1–serine 23. A helical transmembrane segment spans residues valine 24–alanine 44. At threonine 45–serine 151 the chain is on the extracellular side. N-linked (GlcNAc...) asparagine glycans are attached at residues asparagine 68 and asparagine 88. The chain crosses the membrane as a helical span at residues phenylalanine 152 to phenylalanine 172. Over glycine 173–arginine 182 the chain is Cytoplasmic. A helical transmembrane segment spans residues proline 183–tryptophan 203. The Extracellular portion of the chain corresponds to asparagine 204–arginine 212. A helical transmembrane segment spans residues phenylalanine 213–leucine 233. The Cytoplasmic segment spans residues valine 234–threonine 243. A helical membrane pass occupies residues isoleucine 244–valine 264. Residues arginine 265–arginine 268 lie on the Extracellular side of the membrane. The chain crosses the membrane as a helical span at residues glutamate 269–proline 289. Residues glutamate 290–threonine 362 are Cytoplasmic-facing. The helical transmembrane segment at leucine 363 to alanine 383 threads the bilayer. Over proline 384 to glutamate 390 the chain is Extracellular. A helical transmembrane segment spans residues isoleucine 391–glycine 411. Residues leucine 412–arginine 418 lie on the Cytoplasmic side of the membrane. Residues tryptophan 419–proline 439 traverse the membrane as a helical segment. At aspartate 440–threonine 442 the chain is on the extracellular side. The chain crosses the membrane as a helical span at residues leucine 443–methionine 463. Residues alanine 464–arginine 473 lie on the Cytoplasmic side of the membrane. The chain crosses the membrane as a helical span at residues glycine 474–isoleucine 494. Residues asparagine 495–methionine 501 are Extracellular-facing. The chain crosses the membrane as a helical span at residues leucine 502–leucine 522. The Cytoplasmic segment spans residues leucine 523–leucine 604.

This sequence belongs to the major facilitator (TC 2.A.1) superfamily. Organic cation transporter (TC 2.A.1.19) family. As to expression, expressed in the head and predominantly in the retinal pigment cells of the compound eye.

The protein localises to the cell membrane. Beta-alanine transporter required for the uptake of beta-alanine by the glia. Required for the recycling process of the neurotransmitter histamine in photoreceptor neurons of the compound eye and therefore for photoreceptor synaptic transmission. Following histamine release from photoreceptors and its uptake by glia, histamine is conjugated to beta-alanine by e/Ebony to form the inactive metabolite, carcinine. This chain is Beta-alanine transporter, found in Drosophila melanogaster (Fruit fly).